A 412-amino-acid chain; its full sequence is Glutamate-pyruvate aminotransferase AlaC (412 aa).

An N6-(pyridoxal phosphate)lysine modification is found at lysine 244.

Belongs to the class-I pyridoxal-phosphate-dependent aminotransferase family. In terms of assembly, homodimer. The cofactor is pyridoxal 5'-phosphate.

The protein localises to the cytoplasm. The enzyme catalyses L-alanine + 2-oxoglutarate = pyruvate + L-glutamate. Its pathway is amino-acid biosynthesis; L-alanine biosynthesis. Functionally, involved in the biosynthesis of alanine. Catalyzes the transamination of pyruvate by glutamate, leading to the formation of L-alanine and 2-oxoglutarate. Is also able to catalyze the reverse reaction. The chain is Glutamate-pyruvate aminotransferase AlaC from Escherichia coli (strain K12).